The sequence spans 711 residues: Retrovirus-related Pol polyprotein from type-1 retrotransposable element R2 (711 aa).

The region spanning leucine 45–phenylalanine 323 is the Reverse transcriptase domain. Residues leucine 444 to alanine 711 form a nucleic acid-binding endonuclease region.

It catalyses the reaction DNA(n) + a 2'-deoxyribonucleoside 5'-triphosphate = DNA(n+1) + diphosphate. This is Retrovirus-related Pol polyprotein from type-1 retrotransposable element R2 from Popillia japonica (Japanese beetle).